Reading from the N-terminus, the 508-residue chain is 2-isopropylmalate synthase (508 aa).

Residues 5–267 (IKIFDTTLRD…THRIDTTQIY (263 aa)) form the Pyruvate carboxyltransferase domain. Residues Asp14, His202, His204, and Asn238 each coordinate Mn(2+). The regulatory domain stretch occupies residues 390–508 (VIDSFQINSG…SEIGESIISQ (119 aa)).

This sequence belongs to the alpha-IPM synthase/homocitrate synthase family. LeuA type 1 subfamily. As to quaternary structure, homodimer. It depends on Mn(2+) as a cofactor.

It is found in the cytoplasm. It carries out the reaction 3-methyl-2-oxobutanoate + acetyl-CoA + H2O = (2S)-2-isopropylmalate + CoA + H(+). It functions in the pathway amino-acid biosynthesis; L-leucine biosynthesis; L-leucine from 3-methyl-2-oxobutanoate: step 1/4. Catalyzes the condensation of the acetyl group of acetyl-CoA with 3-methyl-2-oxobutanoate (2-ketoisovalerate) to form 3-carboxy-3-hydroxy-4-methylpentanoate (2-isopropylmalate). The sequence is that of 2-isopropylmalate synthase from Ruminiclostridium cellulolyticum (strain ATCC 35319 / DSM 5812 / JCM 6584 / H10) (Clostridium cellulolyticum).